The primary structure comprises 275 residues: Monooxygenase af470 (275 aa).

The enzyme catalyses prefumagillin + NADPH + 2 O2 = fumagillin + acetaldehyde + NADP(+) + H2O. The protein operates within secondary metabolite biosynthesis; terpenoid biosynthesis. Its function is as follows. Monooxygenase; part of the gene cluster that mediates the biosynthesis of fumagillin, a meroterpenoid that has numerous biological activities including irreversible inhibition of human type 2 methionine aminopeptidase (METAP2). Within the pathway, the monooxygenase af470 catalyzes the oxidative cleavage of prefumagillin to yield the final compound of the pathway, fumagillin. The pathway begins with the conversion of farnesyl pyrophosphate (FPP) to beta-trans-bergamotene by the membrane-bound beta-trans-bergamotene synthase af520. The multifunctional cytochrome P450 monooxygenase af510 then converts beta-trans-bergamotene into 5-keto-demethoxyfumagillol via several oxydation steps. 5-keto-demethoxyfumagillol is then subjected to successive C-6 hydroxylation and O-methylation by the dioxygenase af480 and O-methyltransferase af390-400, respectively, to yield 5-keto-fumagillol, which is then stereoselectively reduced by the keto-reductase af490 to 5R-hydroxy-seco-sesquiterpene. The next step is the polyketide transferase af380-catalyzed transfer of a dodecapentaenoyl group synthesized by the polyketide synthase af370 onto 5R-hydroxy-seco-sesquiterpene which leads to the production of prefumagillin. Finally, oxidative cleavage by the monooxygenase af470 converts prefumagillin to fumagillin. This Aspergillus fumigatus (strain ATCC MYA-4609 / CBS 101355 / FGSC A1100 / Af293) (Neosartorya fumigata) protein is Monooxygenase af470.